Consider the following 938-residue polypeptide: Histone deacetylase 7 (938 aa).

A disordered region spans residues 1–40 (MHSPGAGCPALQPDTPGSQPQPMDLRVGQRPTVEPPPEPA). Residues 1–121 (MHSPGAGCPA…LAEVILKKQQ (121 aa)) form an interaction with MEF2C region. Transcription repression regions lie at residues 2-254 (HSPG…DGDR) and 241-533 (GPNP…EHAG). The interaction with MEF2A stretch occupies residues 72 to 172 (SMDPPMPELQ…LPTEPPEHFP (101 aa)). S132 is subject to Phosphoserine. Disordered regions lie at residues 155-280 (SFLP…HHGL), 331-361 (SGSGLHRPLNRTRSEPLPPSATASPLLAPLQ), 373-463 (LIKP…DSVL), and 472-491 (RPLSRTQSSPAAPVSLLSPE). S178 is subject to Phosphoserine; by MARK2, MARK3 and PKD/PRKD1. Residues 190–204 (KSLERRKNPLLRKES) are compositionally biased toward basic and acidic residues. At S204 the chain carries Phosphoserine; by PKD/PRKD2. Positions 220-235 (SSPSSSSTPASGCSSP) are enriched in low complexity. S344 bears the Phosphoserine; by PKD/PRKD1 mark. Phosphoserine is present on residues S350 and S398. Low complexity predominate over residues 350-361 (SATASPLLAPLQ). 2 stretches are compositionally biased toward low complexity: residues 429 to 448 (GRGSISLQQHQQVPPWEQQH) and 479 to 491 (SSPAAPVSLLSPE). At S479 the chain carries Phosphoserine; by PKD/PRKD1. The residue at position 480 (S480) is a Phosphoserine. Positions 505–852 (PATGLVYDSV…VAALLGNKVD (348 aa)) are histone deacetylase. Zn(2+) is bound by residues C520, C522, and H528. S582 is subject to Phosphoserine. C605 serves as a coordination point for Zn(2+). The active site involves H657. An interaction with SIN3A region spans residues 864–938 (NLSAIRSLEA…LVEEEEPMNL (75 aa)). Residues 904 to 938 (AEVEAVTALASLSVGILAEDRPSERLVEEEEPMNL) carry the Nuclear export signal motif.

Belongs to the histone deacetylase family. HD type 2 subfamily. Interacts with HDAC1, HDAC2, HDAC3, HDAC4, HDAC5, NCOR1, NCOR2, SIN3A, SIN3B, RBBP4, RBBP7, MTA1L1, SAP30 and MBD3. Interacts with KAT5 and EDNRA. Interacts with the 14-3-3 protein YWHAE, MEF2A, MEF2B and MEF2C. Interacts with ZMYND15. Interacts with KDM5B. Interacts with PML. Interacts with FOXP3. Interacts with RARA. May be phosphorylated by CaMK1. Phosphorylated by the PKC kinases PKN1 and PKN2, impairing nuclear import. Phosphorylation at Ser-178 by MARK2, MARK3 and PRKD1 promotes interaction with 14-3-3 proteins and export from the nucleus. Phosphorylation at Ser-178 is a prerequisite for phosphorylation at Ser-204. Highly expressed in heart and lung. Expressed at intermediate level in muscle.

It is found in the nucleus. The protein resides in the cytoplasm. The enzyme catalyses N(6)-acetyl-L-lysyl-[histone] + H2O = L-lysyl-[histone] + acetate. It carries out the reaction N(6)-acetyl-L-lysyl-[protein] + H2O = L-lysyl-[protein] + acetate. With respect to regulation, its activity is inhibited by Trichostatin A (TSA), a known histone deacetylase inhibitor. Responsible for the deacetylation of lysine residues on the N-terminal part of the core histones (H2A, H2B, H3 and H4). Histone deacetylation gives a tag for epigenetic repression and plays an important role in transcriptional regulation, cell cycle progression and developmental events. Histone deacetylases act via the formation of large multiprotein complexes. Involved in muscle maturation by repressing transcription of myocyte enhancer factors such as MEF2A, MEF2B and MEF2C. During muscle differentiation, it shuttles into the cytoplasm, allowing the expression of myocyte enhancer factors. Positively regulates the transcriptional repressor activity of FOXP3. Serves as a corepressor of RARA, causing its deacetylation and inhibition of RARE DNA element binding. In association with RARA, plays a role in the repression of microRNA-10a and thereby in the inflammatory response. Also acetylates non-histone proteins, such as ALKBH5. The polypeptide is Histone deacetylase 7 (Hdac7) (Mus musculus (Mouse)).